A 108-amino-acid chain; its full sequence is uncharacterized protein (108 aa).

A signal peptide spans 1–20 (MNLKSIIFVLFIAFFAFSLA). An N-linked (GlcNAc...) asparagine glycan is attached at N39.

The protein belongs to the Dictyostelium gerABC family.

Its subcellular location is the secreted. This is an uncharacterized protein from Dictyostelium discoideum (Social amoeba).